The following is a 199-amino-acid chain: Recombination protein RecR (199 aa).

The C4-type zinc finger occupies 58–73 (CSICCNITDTDPCSMC). The Toprim domain maps to 81-176 (SVICVVEDPR…KVTRIAHGLP (96 aa)).

It belongs to the RecR family.

Functionally, may play a role in DNA repair. It seems to be involved in an RecBC-independent recombinational process of DNA repair. It may act with RecF and RecO. In Clostridioides difficile (strain 630) (Peptoclostridium difficile), this protein is Recombination protein RecR.